The primary structure comprises 318 residues: Methionyl-tRNA formyltransferase (318 aa).

(6S)-5,6,7,8-tetrahydrofolate is bound at residue 112–115 (SILP).

It belongs to the Fmt family.

The catalysed reaction is L-methionyl-tRNA(fMet) + (6R)-10-formyltetrahydrofolate = N-formyl-L-methionyl-tRNA(fMet) + (6S)-5,6,7,8-tetrahydrofolate + H(+). Its function is as follows. Attaches a formyl group to the free amino group of methionyl-tRNA(fMet). The formyl group appears to play a dual role in the initiator identity of N-formylmethionyl-tRNA by promoting its recognition by IF2 and preventing the misappropriation of this tRNA by the elongation apparatus. This is Methionyl-tRNA formyltransferase from Shewanella putrefaciens (strain CN-32 / ATCC BAA-453).